A 558-amino-acid chain; its full sequence is Kelch-like protein 23 (558 aa).

The BTB domain occupies 36–104; it reads TDITLQCPSG…AYTSQIEITK (69 aa). One can recognise a BACK domain in the interval 139–240; that stretch reads CIGMHSFAEF…DPVYLKTALG (102 aa). Kelch repeat units follow at residues 274-320, 321-369, 370-416, 418-466, 467-508, and 510-557; these read TMYI…CLGP, NIYV…TLGG, CVYA…VLHD, IYVI…PFEN, KLYL…IMNG, and IYVT…CVYN.

In Homo sapiens (Human), this protein is Kelch-like protein 23 (KLHL23).